The chain runs to 1204 residues: Exportin-5 (1204 aa).

The segment at 1 to 108 (MEMEQVNALC…ANGTLRILEE (108 aa)) is necessary for interaction with Ran. Lys396 carries the N6-acetyllysine modification. A necessary for interaction with ILF3 region spans residues 533–640 (ELLQLVLNFE…KQLLSNELLL (108 aa)). The tract at residues 641 to 642 (TQ) is pre-siRNA binding.

It belongs to the exportin family. As to quaternary structure, component of a nuclear export receptor complex composed of XPO5, RAN, dsRNA-binding proteins and dsRNA. Found in a nuclear export complex with XPO5, RAN, EEF1A1, and aminoacylated tRNA. Found in a nuclear export complex with XPO5, RAN, ILF3 and dsRNA. Found in a nuclear export complex with XPO5, RAN and pre-miRNA. Found in a nuclear export complex with XPO5, RAN, ILF3 and minihelix VA1 dsRNA. Found in a nuclear export complex with XPO5, RAN, ILF3, ZNF346 and dsRNA. Interacts with EEF1A1, ILF3, NUP153, NUP214 and ZNF346. Interacts with RAN and cargo proteins in a GTP-dependent manner. Interacts with ADAR/ADAR1 (via DRBM domains). Interacts with SMAD4; mediates nuclear export of SMAD4. Interacts with RAN (GTP-bound form).

Its subcellular location is the nucleus. The protein localises to the cytoplasm. Functionally, mediates the nuclear export of proteins bearing a double-stranded RNA binding domain (dsRBD) and double-stranded RNAs (cargos). XPO5 in the nucleus binds cooperatively to the RNA and to the GTPase Ran in its active GTP-bound form. Proteins containing dsRBDs can associate with this trimeric complex through the RNA. Docking of this complex to the nuclear pore complex (NPC) is mediated through binding to nucleoporins. Upon transit of a nuclear export complex into the cytoplasm, hydrolysis of Ran-GTP to Ran-GDP (induced by RANBP1 and RANGAP1, respectively) cause disassembly of the complex and release of the cargo from the export receptor. XPO5 then returns to the nuclear compartment by diffusion through the nuclear pore complex, to mediate another round of transport. The directionality of nuclear export is thought to be conferred by an asymmetric distribution of the GTP- and GDP-bound forms of Ran between the cytoplasm and nucleus. Overexpression may in some circumstances enhance RNA-mediated gene silencing (RNAi). Mediates nuclear export of ADAR/ADAR1 in a RanGTP-dependent manner. Mediates the nuclear export of micro-RNA precursors, which form short hairpins. Also mediates the nuclear export of synthetic short hairpin RNAs used for RNA interference. In some circumstances can also mediate the nuclear export of deacylated and aminoacylated tRNAs. Specifically recognizes dsRNAs that lack a 5'-overhang in a sequence-independent manner, have only a short 3'-overhang, and that have a double-stranded length of at least 15 base-pairs. Binding is dependent on Ran-GTP. In Mus musculus (Mouse), this protein is Exportin-5 (Xpo5).